The following is an 880-amino-acid chain: Valine--tRNA ligase (880 aa).

The 'HIGH' region signature appears at 48-58 (PNVTGKLHLGH). Residues 524 to 528 (KMSKS) carry the 'KMSKS' region motif. Lys-527 contributes to the ATP binding site. A coiled-coil region spans residues 808–879 (LAGLINIEEE…VKERIAQLRS (72 aa)).

The protein belongs to the class-I aminoacyl-tRNA synthetase family. ValS type 1 subfamily. Monomer.

Its subcellular location is the cytoplasm. It catalyses the reaction tRNA(Val) + L-valine + ATP = L-valyl-tRNA(Val) + AMP + diphosphate. Functionally, catalyzes the attachment of valine to tRNA(Val). As ValRS can inadvertently accommodate and process structurally similar amino acids such as threonine, to avoid such errors, it has a 'posttransfer' editing activity that hydrolyzes mischarged Thr-tRNA(Val) in a tRNA-dependent manner. The protein is Valine--tRNA ligase of Enterococcus faecalis (strain ATCC 700802 / V583).